A 469-amino-acid chain; its full sequence is MTAKFTDYIVKDIGLAEFGRKEISLAETEMPGLMATREEYGPKQPLKGAKIAGSLHMTIQTAVLIETLVALGAEVRWVSCNIYSTQDHAAAAIAAAGIPVFAVKGETLKDYWDYTAKLFDWSDGGTPNMILDDGGDATMFVHQGLRAENGDTMFLDQHNSEEEEIFFALIKRILKEKPKGYFATLAKNIKGVSEETTTGVHRLYDMEKAGKLLFPAINVNDSVTKSKFDNLYGCRESLVDGIRRGTDVMLSGKVAMVAGFGDVGKGSAASLRQAGCRVMVSEVDPICALQAAMEGYQVVTMEDAAPIADIFVTATGNKDIITIEHMRAMKDRAIVCNIGHFDNEIQVATLKNMKWDNIKPQVDEITFPDGKRMILLSEGRLVNLGNAMGHPSFVMSASFTNQTLAQIELFQNQGKYEKKVYVLPKTLDEKVARLHLAKIGVKLTELRKDQADYIGVKVEGPFKADHYRY.

Substrate-binding residues include Thr58, Asp133, and Glu195. Position 196 to 198 (196 to 198) interacts with NAD(+); it reads TTT. Substrate contacts are provided by Lys225 and Asp229. NAD(+)-binding positions include Asn230, 259–264, Glu282, Asn317, 338–340, and Asn383; these read GFGDVG and IGH.

Belongs to the adenosylhomocysteinase family. The cofactor is NAD(+).

The protein localises to the cytoplasm. The enzyme catalyses S-adenosyl-L-homocysteine + H2O = L-homocysteine + adenosine. Its pathway is amino-acid biosynthesis; L-homocysteine biosynthesis; L-homocysteine from S-adenosyl-L-homocysteine: step 1/1. Its function is as follows. May play a key role in the regulation of the intracellular concentration of adenosylhomocysteine. This Rhodopseudomonas palustris (strain ATCC BAA-98 / CGA009) protein is Adenosylhomocysteinase.